We begin with the raw amino-acid sequence, 342 residues long: GTPase Obg (342 aa).

An Obg domain is found at 1-159; sequence MKFIDEAKIY…RWIRLELKLL (159 aa). Residues 160-332 enclose the OBG-type G domain; that stretch reads ADVGIIGLPN…LLYKIGEALK (173 aa). GTP contacts are provided by residues 166–173, 191–195, 214–217, 284–287, and 313–315; these read GLPNVGKS, FTTLT, DIPG, NKTD, and SAA. Mg(2+) contacts are provided by S173 and T193.

The protein belongs to the TRAFAC class OBG-HflX-like GTPase superfamily. OBG GTPase family. Monomer. Mg(2+) serves as cofactor.

The protein resides in the cytoplasm. Functionally, an essential GTPase which binds GTP, GDP and possibly (p)ppGpp with moderate affinity, with high nucleotide exchange rates and a fairly low GTP hydrolysis rate. Plays a role in control of the cell cycle, stress response, ribosome biogenesis and in those bacteria that undergo differentiation, in morphogenesis control. The chain is GTPase Obg from Syntrophus aciditrophicus (strain SB).